Here is a 451-residue protein sequence, read N- to C-terminus: Cysteine protease ATG4 (451 aa).

Cys-122 acts as the Nucleophile in catalysis. Catalysis depends on residues Asp-297 and His-299.

This sequence belongs to the peptidase C54 family. Interacts with ATG8.

It is found in the cytoplasm. The protein resides in the nucleus. It localises to the preautophagosomal structure. It carries out the reaction [protein]-C-terminal L-amino acid-glycyl-phosphatidylethanolamide + H2O = [protein]-C-terminal L-amino acid-glycine + a 1,2-diacyl-sn-glycero-3-phosphoethanolamine. Cysteine protease that plays a key role in cytoplasm to vacuole transport (Cvt) and autophagy by mediating both proteolytic activation and delipidation of ATG8. Required for selective autophagic degradation of the nucleus (nucleophagy) as well as for mitophagy which contributes to regulate mitochondrial quantity and quality by eliminating the mitochondria to a basal level to fulfill cellular energy requirements and preventing excess ROS production. The protease activity is required for proteolytic activation of ATG8: cleaves the C-terminal amino acid of ATG8 to reveal a C-terminal glycine. ATG8 ubiquitin-like activity requires the exposure of the glycine at the C-terminus for its conjugation to phosphatidylethanolamine (PE) and its insertion to membranes, which is necessary for autophagy. The ATG8-PE conjugate mediates tethering between adjacent membranes and stimulates membrane hemifusion, leading to expansion of the autophagosomal membrane during autophagy. In addition to the protease activity, also catalyzes deconjugation of PE-conjugated forms of ATG8 during macroautophagy: ATG8 delipidation is required to release the protein from membranes, which facilitates multiple events during macroautophagy, and especially for efficient autophagosome biogenesis, the assembly of ATG9-containing tubulovesicular clusters into phagophores/autophagosomes, and for the disassembly of PAS-associated ATG components. ATG8 delipidation by ATG4 also recycles ATG8-PE generated on inappropriate membranes to maintain a reservoir of unlipidated ATG8 that is required for autophagosome formation at the PAS. The chain is Cysteine protease ATG4 from Kluyveromyces marxianus (strain DMKU3-1042 / BCC 29191 / NBRC 104275) (Yeast).